Reading from the N-terminus, the 242-residue chain is Zinc-finger homeodomain protein 11 (242 aa).

Residues 31 to 82 form a ZF-HD dimerization-type; degenerate zinc finger; the sequence is YKECLKNHAANLGGHALDGCGEFMPSPTATSTDPSSLRCAACGCHRNFHRRD. Disordered regions lie at residues 83 to 109 and 135 to 161; these read PSEN…SRHV and PGPS…RTRT. The segment at residues 156–213 is a DNA-binding region (homeobox; atypical); the sequence is RKRTRTKFTPEQKIKMRAFAEKAGWKINGCDEKSVREFCNEVGIERGVLKVWMHNNKY.

Homo- and heterodimer with other ZFHD proteins. Interacts with HIPP20, HIPP21, HIPP22, HIPP23, HIPP24, HIPP26, HIPP27, HIPP30 and MED25 (via ACID domain). Interacts with NAC019, NAC055 and NAC072 (via NAC binding domain). Binds to ZHD1, ZHD2, ZHD3, ZHD4, ZHD5, ZHD6, ZHD7, ZHD8, ZHD9, ZHD12, ZHD13 and ZHD14. Expressed in roots, inflorescences, open flowers and seeds. Detected in stems and seedlings.

It localises to the nucleus. Transcription factor involved in the up-regulation of several stress-inducible genes. Acts as a transcriptional activator by interacting with MED25 and NAC proteins. Involved in increased drought tolerance. This is Zinc-finger homeodomain protein 11 (ZHD11) from Arabidopsis thaliana (Mouse-ear cress).